The following is a 384-amino-acid chain: S-adenosylmethionine synthase (384 aa).

His-15 lines the ATP pocket. Asp-17 contributes to the Mg(2+) binding site. Residue Glu-43 coordinates K(+). The L-methionine site is built by Glu-56 and Gln-99. A flexible loop region spans residues 99-109; sequence QSPDINQGVDR. ATP contacts are provided by residues 164 to 166, 230 to 231, Asp-239, 245 to 246, Ala-262, and Lys-266; these read DAK, RF, and RK. Asp-239 is an L-methionine binding site. L-methionine is bound at residue Lys-270.

Belongs to the AdoMet synthase family. Homotetramer; dimer of dimers. Mg(2+) serves as cofactor. Requires K(+) as cofactor.

The protein resides in the cytoplasm. It catalyses the reaction L-methionine + ATP + H2O = S-adenosyl-L-methionine + phosphate + diphosphate. Its pathway is amino-acid biosynthesis; S-adenosyl-L-methionine biosynthesis; S-adenosyl-L-methionine from L-methionine: step 1/1. Its function is as follows. Catalyzes the formation of S-adenosylmethionine (AdoMet) from methionine and ATP. The overall synthetic reaction is composed of two sequential steps, AdoMet formation and the subsequent tripolyphosphate hydrolysis which occurs prior to release of AdoMet from the enzyme. This is S-adenosylmethionine synthase from Klebsiella pneumoniae (strain 342).